Reading from the N-terminus, the 277-residue chain is Myelin proteolipid protein (277 aa).

At 1 to 10 (MGLLECCARC) the chain is on the cytoplasmic side. S-palmitoyl cysteine attachment occurs at residues Cys-6, Cys-7, and Cys-10. The chain crosses the membrane as a helical span at residues 11–36 (LVGAPFASLVATGLCFFGVALFCGCG). The Extracellular segment spans residues 37–59 (HEALTGTEKLIETYFSKNYQDYE). A helical transmembrane segment spans residues 60–88 (YLINVIHAFQYVIYGTASFFFLYGALLLA). The Cytoplasmic portion of the chain corresponds to 89 to 151 (EGFYTTGAVR…LGKWLGHPDK (63 aa)). Cys-109 carries the S-palmitoyl cysteine lipid modification. Residue Ser-114 is modified to Phosphoserine. 2 positions are modified to phosphothreonine: Thr-116 and Thr-118. S-palmitoyl cysteine attachment occurs at residues Cys-139 and Cys-141. The chain crosses the membrane as a helical span at residues 152-178 (FVGITYALTVVWLLVFACSAVPVYIYF). Topologically, residues 179 to 238 (NTWTTCQSIAFPSKTSASIGTLCADARMYGVLPWNAFPGKVCGSNLLSICKTAEFQMTFH) are extracellular. 2 cysteine pairs are disulfide-bonded: Cys-184/Cys-228 and Cys-201/Cys-220. Thr-199 carries the O-palmitoyl threonine lipid modification. The chain crosses the membrane as a helical span at residues 239-268 (LFIAAFVGAAATLVSLLTFMIAATYNFAVL). Over 269-277 (KLMGRGTKF) the chain is Cytoplasmic.

The protein belongs to the myelin proteolipid protein family. As to quaternary structure, interacts with MAL.

It is found in the cell membrane. Its subcellular location is the myelin membrane. In terms of biological role, this is the major myelin protein from the central nervous system. It plays an important role in the formation or maintenance of the multilamellar structure of myelin. In Oryctolagus cuniculus (Rabbit), this protein is Myelin proteolipid protein (PLP1).